The chain runs to 501 residues: Aspartyl/glutamyl-tRNA(Asn/Gln) amidotransferase subunit B (501 aa).

The tract at residues 276–299 is disordered; that stretch reads HYQEADGSTSKGRPKETAEDYRYF. The span at 288–299 shows a compositional bias: basic and acidic residues; sequence RPKETAEDYRYF.

It belongs to the GatB/GatE family. GatB subfamily. As to quaternary structure, heterotrimer of A, B and C subunits.

It catalyses the reaction L-glutamyl-tRNA(Gln) + L-glutamine + ATP + H2O = L-glutaminyl-tRNA(Gln) + L-glutamate + ADP + phosphate + H(+). The enzyme catalyses L-aspartyl-tRNA(Asn) + L-glutamine + ATP + H2O = L-asparaginyl-tRNA(Asn) + L-glutamate + ADP + phosphate + 2 H(+). Its function is as follows. Allows the formation of correctly charged Asn-tRNA(Asn) or Gln-tRNA(Gln) through the transamidation of misacylated Asp-tRNA(Asn) or Glu-tRNA(Gln) in organisms which lack either or both of asparaginyl-tRNA or glutaminyl-tRNA synthetases. The reaction takes place in the presence of glutamine and ATP through an activated phospho-Asp-tRNA(Asn) or phospho-Glu-tRNA(Gln). The polypeptide is Aspartyl/glutamyl-tRNA(Asn/Gln) amidotransferase subunit B (Corynebacterium glutamicum (strain R)).